The chain runs to 625 residues: MSVLVRLTSKIASLAKSGRIASARQVFDGMPELDTVAWNTMLTSYSRLGLHQEAIALFTQLRFSDAKPDDYSFTAILSTCASLGNVKFGRKIQSLVIRSGFCASLPVNNSLIDMYGKCSDTLSANKVFRDMCCDSRNEVTWCSLLFAYMNAEQFEAALDVFVEMPKRVAFAWNIMISGHAHCGKLESCLSLFKEMLESEFKPDCYTFSSLMNACSADSSNVVYGRMVHAVMLKNGWSSAVEAKNSVLSFYTKLGSRDDAMRELESIEVLTQVSWNSIIDACMKIGETEKALEVFHLAPEKNIVTWTTMITGYGRNGDGEQALRFFVEMMKSGVDSDHFAYGAVLHACSGLALLGHGKMIHGCLIHCGFQGYAYVGNALVNLYAKCGDIKEADRAFGDIANKDLVSWNTMLFAFGVHGLADQALKLYDNMIASGIKPDNVTFIGLLTTCSHSGLVEEGCMIFESMVKDYRIPLEVDHVTCMIDMFGRGGHLAEAKDLATTYSSLVTDSSNNSSWETLLGACSTHWHTELGREVSKVLKIAEPSEEMSFVLLSNLYCSTGRWKEGEDVRREMVERGMKKTPGCSWIEVGNQVSTFVVGDSSHPRLEELSETLNCLQHEMRNPETFGP.

The N-terminal 7 residues, Met1 to Leu7, are a transit peptide targeting the mitochondrion. PPR repeat units follow at residues Val3–Leu33, Asp34–Pro68, Asp69–Ala103, Ser104–Asp134, Asn137–Arg167, Val168–Pro202, Asp203–Ser238, Ala239–Leu269, Thr270–Lys300, Asn301–Ser335, Asp336–Gly370, Tyr371–Lys401, Asp402–Pro436, Asp437–Pro471, and Glu473–Leu503. Positions Ser512–Gly587 are type E motif. Positions Asn588 to Arg618 are type E(+) motif.

Belongs to the PPR family. PCMP-E subfamily.

Its subcellular location is the mitochondrion. In Arabidopsis thaliana (Mouse-ear cress), this protein is Pentatricopeptide repeat-containing protein At2g36980, mitochondrial (PCMP-E73).